A 282-amino-acid polypeptide reads, in one-letter code: Probable porphobilinogen deaminase (282 aa).

Cysteine 233 is subject to S-(dipyrrolylmethanemethyl)cysteine.

This sequence belongs to the HMBS family. Dipyrromethane is required as a cofactor.

The enzyme catalyses 4 porphobilinogen + H2O = hydroxymethylbilane + 4 NH4(+). It functions in the pathway porphyrin-containing compound metabolism; protoporphyrin-IX biosynthesis; coproporphyrinogen-III from 5-aminolevulinate: step 2/4. Tetrapolymerization of the monopyrrole PBG into the hydroxymethylbilane pre-uroporphyrinogen in several discrete steps. This Picrophilus torridus (strain ATCC 700027 / DSM 9790 / JCM 10055 / NBRC 100828 / KAW 2/3) protein is Probable porphobilinogen deaminase.